Reading from the N-terminus, the 371-residue chain is Peptidyl-prolyl cis-trans isomerase D (371 aa).

The PPIase cyclophilin-type domain maps to 11–172 (FFDIQIGNEK…KDVTIVECGE (162 aa)). Positions 175-195 (GQDYDDADKQTPDATGDPYED) are disordered. TPR repeat units lie at residues 214–247 (ASEL…LHEF), 267–300 (FALH…ANAA), and 308–341 (AKAY…APGD).

Belongs to the cyclophilin-type PPIase family. PPIase D subfamily.

Its subcellular location is the cytoplasm. The enzyme catalyses [protein]-peptidylproline (omega=180) = [protein]-peptidylproline (omega=0). Its function is as follows. PPIases accelerate the folding of proteins. It catalyzes the cis-trans isomerization of proline imidic peptide bonds in oligopeptides. In Aspergillus oryzae (strain ATCC 42149 / RIB 40) (Yellow koji mold), this protein is Peptidyl-prolyl cis-trans isomerase D (cpr6).